A 456-amino-acid polypeptide reads, in one-letter code: tRNA-2-methylthio-N(6)-dimethylallyladenosine synthase (456 aa).

One can recognise an MTTase N-terminal domain in the interval 1–116; the sequence is MTYFFETYGC…FESIFQEIEQ (116 aa). Cys-10, Cys-46, Cys-79, Cys-162, Cys-166, and Cys-169 together coordinate [4Fe-4S] cluster. Residues 148–384 form the Radical SAM core domain; it reads SEGSFQSFIP…IALQMSTTLK (237 aa). Residues 387 to 452 enclose the TRAM domain; it reads RARVGKTLPV…GRTLRAHLVQ (66 aa).

This sequence belongs to the methylthiotransferase family. MiaB subfamily. Monomer. It depends on [4Fe-4S] cluster as a cofactor.

The protein localises to the cytoplasm. The catalysed reaction is N(6)-dimethylallyladenosine(37) in tRNA + (sulfur carrier)-SH + AH2 + 2 S-adenosyl-L-methionine = 2-methylsulfanyl-N(6)-dimethylallyladenosine(37) in tRNA + (sulfur carrier)-H + 5'-deoxyadenosine + L-methionine + A + S-adenosyl-L-homocysteine + 2 H(+). In terms of biological role, catalyzes the methylthiolation of N6-(dimethylallyl)adenosine (i(6)A), leading to the formation of 2-methylthio-N6-(dimethylallyl)adenosine (ms(2)i(6)A) at position 37 in tRNAs that read codons beginning with uridine. The chain is tRNA-2-methylthio-N(6)-dimethylallyladenosine synthase from Treponema pallidum (strain Nichols).